The following is a 339-amino-acid chain: Serpentine receptor class alpha-21 (339 aa).

Helical transmembrane passes span 30 to 50 (FNFLFITTVILLSYCFTWLAI), 150 to 170 (FIAVSLLVLQLLLTLVSFYIA), 199 to 219 (VRTVVMVCCLVVTGFIYYLSV), 250 to 270 (ILIVLKLFCNMLSSIGINLLL), and 282 to 302 (VLVALFLPGVTYANLCLPLVI).

Belongs to the nematode receptor-like protein sra family.

The protein localises to the membrane. The polypeptide is Serpentine receptor class alpha-21 (sra-21) (Caenorhabditis elegans).